The chain runs to 391 residues: Stearoyl-[acyl-carrier-protein] 9-desaturase 6, chloroplastic (391 aa).

The N-terminal 38 residues, 1 to 38, are a transit peptide targeting the chloroplast; it reads MLAHKSLLSFTTQWATLMPSPSTFLASRPRGPAKISAV. Fe cation contacts are provided by Glu-130, Glu-168, His-171, Glu-221, Glu-254, and His-257.

The protein belongs to the fatty acid desaturase type 2 family. In terms of assembly, homodimer. Fe(2+) serves as cofactor.

Its subcellular location is the plastid. The protein localises to the chloroplast. It carries out the reaction octadecanoyl-[ACP] + 2 reduced [2Fe-2S]-[ferredoxin] + O2 + 2 H(+) = (9Z)-octadecenoyl-[ACP] + 2 oxidized [2Fe-2S]-[ferredoxin] + 2 H2O. Its pathway is lipid metabolism; fatty acid metabolism. Functionally, converts stearoyl-ACP to oleoyl-ACP by introduction of a cis double bond between carbons 9 and 10 of the acyl chain. In Arabidopsis thaliana (Mouse-ear cress), this protein is Stearoyl-[acyl-carrier-protein] 9-desaturase 6, chloroplastic (S-ACP-DES6).